Consider the following 313-residue polypeptide: Porphobilinogen deaminase (313 aa).

Cysteine 242 carries the S-(dipyrrolylmethanemethyl)cysteine modification.

Belongs to the HMBS family. Monomer. Requires dipyrromethane as cofactor.

It carries out the reaction 4 porphobilinogen + H2O = hydroxymethylbilane + 4 NH4(+). It participates in porphyrin-containing compound metabolism; protoporphyrin-IX biosynthesis; coproporphyrinogen-III from 5-aminolevulinate: step 2/4. Its function is as follows. Tetrapolymerization of the monopyrrole PBG into the hydroxymethylbilane pre-uroporphyrinogen in several discrete steps. The polypeptide is Porphobilinogen deaminase (hemC) (Proteus mirabilis).